The following is a 250-amino-acid chain: Eukaryotic translation initiation factor 3 subunit K (250 aa).

Residues 54–235 (YDLFGNLAIL…DVKAGVVKEN (182 aa)) form the PCI domain.

This sequence belongs to the eIF-3 subunit K family. As to quaternary structure, component of the eukaryotic translation initiation factor 3 (eIF-3) complex.

It localises to the cytoplasm. Its function is as follows. Component of the eukaryotic translation initiation factor 3 (eIF-3) complex, which is involved in protein synthesis of a specialized repertoire of mRNAs and, together with other initiation factors, stimulates binding of mRNA and methionyl-tRNAi to the 40S ribosome. The eIF-3 complex specifically targets and initiates translation of a subset of mRNAs involved in cell proliferation. This is Eukaryotic translation initiation factor 3 subunit K from Cryptococcus neoformans var. neoformans serotype D (strain B-3501A) (Filobasidiella neoformans).